The primary structure comprises 156 residues: Putative increased recombination centers protein 11 (156 aa).

A helical transmembrane segment spans residues 20 to 42 (AALGATCLLHYLTTSLSIRFFFH).

Its subcellular location is the membrane. In Saccharomyces cerevisiae (strain ATCC 204508 / S288c) (Baker's yeast), this protein is Putative increased recombination centers protein 11 (IRC11).